A 180-amino-acid polypeptide reads, in one-letter code: Large ribosomal subunit protein uL10 (180 aa).

The protein belongs to the universal ribosomal protein uL10 family. As to quaternary structure, part of the ribosomal stalk of the 50S ribosomal subunit. The N-terminus interacts with L11 and the large rRNA to form the base of the stalk. The C-terminus forms an elongated spine to which L12 dimers bind in a sequential fashion forming a multimeric L10(L12)X complex.

In terms of biological role, forms part of the ribosomal stalk, playing a central role in the interaction of the ribosome with GTP-bound translation factors. In Treponema pallidum (strain Nichols), this protein is Large ribosomal subunit protein uL10 (rplJ).